The sequence spans 405 residues: DNA polymerase IV 1 (405 aa).

The region spanning Ile23–Gly203 is the UmuC domain. The Mg(2+) site is built by Asp27 and Asp120. Residue Glu121 is part of the active site.

Belongs to the DNA polymerase type-Y family. Monomer. Mg(2+) serves as cofactor.

It is found in the cytoplasm. The enzyme catalyses DNA(n) + a 2'-deoxyribonucleoside 5'-triphosphate = DNA(n+1) + diphosphate. Functionally, poorly processive, error-prone DNA polymerase involved in untargeted mutagenesis. Copies undamaged DNA at stalled replication forks, which arise in vivo from mismatched or misaligned primer ends. These misaligned primers can be extended by PolIV. Exhibits no 3'-5' exonuclease (proofreading) activity. May be involved in translesional synthesis, in conjunction with the beta clamp from PolIII. The chain is DNA polymerase IV 1 (dinB1) from Agrobacterium fabrum (strain C58 / ATCC 33970) (Agrobacterium tumefaciens (strain C58)).